We begin with the raw amino-acid sequence, 842 residues long: Amyloid-beta A4 precursor protein-binding family A member 1 (842 aa).

3 disordered regions span residues 1–121 (MNHL…DESA), 238–349 (RLHH…EKRD), and 366–439 (KTRT…KESR). Residue S82 is modified to Phosphoserine. Composition is skewed to basic and acidic residues over residues 106 to 115 (DGYEAERAQD) and 240 to 258 (HHYD…KEAE). Residues S246, S250, S252, S267, S284, and S289 each carry the phosphoserine modification. At T309 the chain carries Phosphothreonine. S317 and S372 each carry phosphoserine. T375 carries the post-translational modification Phosphothreonine. Residues 392–403 (PTRDCDDQRPVD) are compositionally biased toward basic and acidic residues. Low complexity predominate over residues 404–421 (GDSPSPGSSSPLGAESSS). A phosphoserine mark is found at S406, S408, S413, and S573. The region spanning 460 to 648 (LIDGIIFAAN…LLNTQDMYND (189 aa)) is the PID domain. The interval 631-648 (LSQKEYSDLLNTQDMYND) is autoinhibitory helix linker. 2 PDZ domains span residues 661-746 (DVFI…NIVR) and 752-828 (TVLI…MPAA).

In terms of assembly, part of a multimeric complex containing STXBP1 and STX1A. Interacts with STXBP1. Component of the brain-specific heterotrimeric complex (LIN-10-LIN-2-LIN-7 complex) composed of at least APBA1, CASK, and LIN7, which associates with the motor protein KIF17 to transport vesicles along microtubules. Within the complex, interacts (via PDZ domain) with the motor protein KIF17; the interaction is direct and is required for association of KIF17 with the cargo that is to be transported. Binds to the cytoplasmic domain of amyloid protein (APP). Interacts (via PDZ 1 and 2 domains) with FSPB. Isoform 3 interacts (via its truncated PID domain) with active, GTP-bound RAB6A. Also interacts with GTP-bound RAB6B. Isoform 3 is expressed in brain.

The protein localises to the cytoplasm. Its subcellular location is the perinuclear region. It is found in the nucleus. It localises to the golgi apparatus. Its function is as follows. Putative function in synaptic vesicle exocytosis by binding to Munc18-1, an essential component of the synaptic vesicle exocytotic machinery. May modulate processing of the amyloid-beta precursor protein (APP) and hence formation of AAP-beta. Component of the LIN-10-LIN-2-LIN-7 complex, which associates with the motor protein KIF17 to transport vesicles containing N-methyl-D-aspartate (NMDA) receptor subunit NR2B along microtubules. The sequence is that of Amyloid-beta A4 precursor protein-binding family A member 1 from Mus musculus (Mouse).